Reading from the N-terminus, the 339-residue chain is Casein kinase II subunit alpha' (339 aa).

A Protein kinase domain is found at 50–334 (YEIINKIGRG…AKEAMDHKFF (285 aa)). ATP is bound by residues 56–64 (IGRGKYSEV) and K79. Residue D167 is the Proton acceptor of the active site.

The protein belongs to the protein kinase superfamily. Ser/Thr protein kinase family. CK2 subfamily. Tetramer composed of an alpha chain, an alpha', one beta chain and one beta' chain. Interacts with FACT subunits POB3 and SPT16. Interacts with NAP1. Interacts with YTA7.

The enzyme catalyses L-seryl-[protein] + ATP = O-phospho-L-seryl-[protein] + ADP + H(+). The catalysed reaction is L-threonyl-[protein] + ATP = O-phospho-L-threonyl-[protein] + ADP + H(+). Catalytic subunit of a constitutively active serine/threonine-protein kinase complex that phosphorylates a large number of substrates containing acidic residues C-terminal to the phosphorylated serine or threonine. Phosphorylates YTA7 during S-phase to promote transcription of histones. This chain is Casein kinase II subunit alpha', found in Saccharomyces cerevisiae (strain ATCC 204508 / S288c) (Baker's yeast).